A 183-amino-acid polypeptide reads, in one-letter code: CASP-like protein UU1 (183 aa).

Topologically, residues 1-33 (MEESQQQSTKFDAPPSPYVPSRVYLAQIYWKKP) are cytoplasmic. Residues 34–54 (AIVVLRVLQFVFSLIAFSVMA) form a helical membrane-spanning segment. The Extracellular segment spans residues 55–72 (DLLHDVQGSIKSLSYTVA). Residues 73 to 93 (IGVLACAYALAQLSFSLWCVI) traverse the membrane as a helical segment. Residues 94 to 118 (RGATSSSGVTPLYQYATFICDQMST) lie on the Cytoplasmic side of the membrane. A helical membrane pass occupies residues 119-139 (YFLISAASATATLIDVSGVCG). At 140–156 (SNGSGTNLCSRSTASVT) the chain is on the extracellular side. The N-linked (GlcNAc...) asparagine glycan is linked to Asn-141. Residues 157 to 177 (FAFLAFLAFSASSVLTGYYLV) traverse the membrane as a helical segment. The Cytoplasmic portion of the chain corresponds to 178–183 (KCILKA).

Belongs to the Casparian strip membrane proteins (CASP) family. As to quaternary structure, homodimer and heterodimers.

It is found in the cell membrane. The sequence is that of CASP-like protein UU1 from Selaginella moellendorffii (Spikemoss).